A 92-amino-acid polypeptide reads, in one-letter code: Small ribosomal subunit protein bS6 (92 aa).

It belongs to the bacterial ribosomal protein bS6 family.

Functionally, binds together with bS18 to 16S ribosomal RNA. The protein is Small ribosomal subunit protein bS6 of Clostridioides difficile (strain 630) (Peptoclostridium difficile).